A 256-amino-acid chain; its full sequence is Large ribosomal subunit protein bL28m (256 aa).

The transit peptide at 1-55 (MPLHKYPVWLWKRLQLREGICSRLPGHYLRSLEEERTPTPVHYRPHGAKFKINPK) directs the protein to the mitochondrion.

The protein belongs to the bacterial ribosomal protein bL28 family. As to quaternary structure, component of the mitochondrial large ribosomal subunit (mt-LSU). Mature mammalian 55S mitochondrial ribosomes consist of a small (28S) and a large (39S) subunit. The 28S small subunit contains a 12S ribosomal RNA (12S mt-rRNA) and 30 different proteins. The 39S large subunit contains a 16S rRNA (16S mt-rRNA), a copy of mitochondrial valine transfer RNA (mt-tRNA(Val)), which plays an integral structural role, and 52 different proteins. Interacts with OXA1L. In terms of tissue distribution, found in a variety of normal tissues including spleen, testes, thymus, liver, kidney, brain, adrenal, lung and retinal tissue.

The protein localises to the mitochondrion. The protein is Large ribosomal subunit protein bL28m (MRPL28) of Homo sapiens (Human).